Reading from the N-terminus, the 59-residue chain is Large ribosomal subunit protein uL30 (59 aa).

Belongs to the universal ribosomal protein uL30 family. Part of the 50S ribosomal subunit.

The protein is Large ribosomal subunit protein uL30 of Yersinia pseudotuberculosis serotype I (strain IP32953).